Reading from the N-terminus, the 294-residue chain is ATP synthase gamma chain (294 aa).

The protein belongs to the ATPase gamma chain family. In terms of assembly, F-type ATPases have 2 components, CF(1) - the catalytic core - and CF(0) - the membrane proton channel. CF(1) has five subunits: alpha(3), beta(3), gamma(1), delta(1), epsilon(1). CF(0) has three main subunits: a, b and c.

Its subcellular location is the cell inner membrane. Functionally, produces ATP from ADP in the presence of a proton gradient across the membrane. The gamma chain is believed to be important in regulating ATPase activity and the flow of protons through the CF(0) complex. The protein is ATP synthase gamma chain of Paraburkholderia phytofirmans (strain DSM 17436 / LMG 22146 / PsJN) (Burkholderia phytofirmans).